The sequence spans 209 residues: 2,3-bisphosphoglycerate-dependent phosphoglycerate mutase (209 aa).

Residues 8–15 (RHGQSEGN), 21–22 (TG), Arg-60, 87–90 (ERDY), Lys-98, 114–115 (RR), and 158–159 (GN) each bind substrate. His-9 serves as the catalytic Tele-phosphohistidine intermediate. Catalysis depends on Glu-87, which acts as the Proton donor/acceptor.

This sequence belongs to the phosphoglycerate mutase family. BPG-dependent PGAM subfamily. In terms of assembly, homodimer.

The catalysed reaction is (2R)-2-phosphoglycerate = (2R)-3-phosphoglycerate. It participates in carbohydrate degradation; glycolysis; pyruvate from D-glyceraldehyde 3-phosphate: step 3/5. In terms of biological role, catalyzes the interconversion of 2-phosphoglycerate and 3-phosphoglycerate. In Rhizobium etli (strain ATCC 51251 / DSM 11541 / JCM 21823 / NBRC 15573 / CFN 42), this protein is 2,3-bisphosphoglycerate-dependent phosphoglycerate mutase.